Reading from the N-terminus, the 338-residue chain is UPF0252 protein PF1496 (338 aa).

A helical membrane pass occupies residues 100 to 120 (ILSMLFLVFILFPAFTSHIWS).

It belongs to the UPF0252 family.

It localises to the membrane. The protein is UPF0252 protein PF1496 of Pyrococcus furiosus (strain ATCC 43587 / DSM 3638 / JCM 8422 / Vc1).